The sequence spans 241 residues: Probable phosphatase Cthe_0111 (241 aa).

Positions 8, 10, 16, 41, 74, 102, 132, 192, and 194 each coordinate Zn(2+).

It belongs to the PHP family. Requires Zn(2+) as cofactor.

The protein is Probable phosphatase Cthe_0111 of Acetivibrio thermocellus (strain ATCC 27405 / DSM 1237 / JCM 9322 / NBRC 103400 / NCIMB 10682 / NRRL B-4536 / VPI 7372) (Clostridium thermocellum).